The primary structure comprises 504 residues: Glucose-6-phosphate isomerase (504 aa).

Glu-333 functions as the Proton donor in the catalytic mechanism. Catalysis depends on residues His-364 and Lys-473.

This sequence belongs to the GPI family.

It localises to the cytoplasm. It catalyses the reaction alpha-D-glucose 6-phosphate = beta-D-fructose 6-phosphate. It functions in the pathway carbohydrate biosynthesis; gluconeogenesis. It participates in carbohydrate degradation; glycolysis; D-glyceraldehyde 3-phosphate and glycerone phosphate from D-glucose: step 2/4. In terms of biological role, catalyzes the reversible isomerization of glucose-6-phosphate to fructose-6-phosphate. This Xanthomonas oryzae pv. oryzae (strain MAFF 311018) protein is Glucose-6-phosphate isomerase.